The primary structure comprises 901 residues: Alanine--tRNA ligase (901 aa).

Zn(2+) is bound by residues His581, His585, Cys684, and His688.

This sequence belongs to the class-II aminoacyl-tRNA synthetase family. Requires Zn(2+) as cofactor.

The protein localises to the cytoplasm. The enzyme catalyses tRNA(Ala) + L-alanine + ATP = L-alanyl-tRNA(Ala) + AMP + diphosphate. In terms of biological role, catalyzes the attachment of alanine to tRNA(Ala) in a two-step reaction: alanine is first activated by ATP to form Ala-AMP and then transferred to the acceptor end of tRNA(Ala). Also edits incorrectly charged Ser-tRNA(Ala) and Gly-tRNA(Ala) via its editing domain. This chain is Alanine--tRNA ligase, found in Mycobacterium marinum (strain ATCC BAA-535 / M).